We begin with the raw amino-acid sequence, 430 residues long: Histidine--tRNA ligase (430 aa).

This sequence belongs to the class-II aminoacyl-tRNA synthetase family. Homodimer.

The protein localises to the cytoplasm. The catalysed reaction is tRNA(His) + L-histidine + ATP = L-histidyl-tRNA(His) + AMP + diphosphate + H(+). The polypeptide is Histidine--tRNA ligase (Acinetobacter baylyi (strain ATCC 33305 / BD413 / ADP1)).